Here is a 347-residue protein sequence, read N- to C-terminus: Heat-inducible transcription repressor HrcA (347 aa).

This sequence belongs to the HrcA family.

In terms of biological role, negative regulator of class I heat shock genes (grpE-dnaK-dnaJ and groELS operons). Prevents heat-shock induction of these operons. In Laribacter hongkongensis (strain HLHK9), this protein is Heat-inducible transcription repressor HrcA.